Consider the following 203-residue polypeptide: MGAEKITSKIVEDANKNAEKILAEALNEKEAILTEAKEEASKKEQAIAKKGEKDAEMTKNRILAEARLSAKKKLLEEREKTIQLTLEKLEEDLVKLPQKDEYKDTLLKLIISGVYSVGGGELELLLNKKDFEVIDDSTLWALEKEMEDRLKKVTVLKKGEAKSIIGGCIIKTADHTKVSDNSLEATFERNLDSVRAKIAEMLF.

Belongs to the V-ATPase E subunit family. Has multiple subunits with at least A(3), B(3), C, D, E, F, H, I and proteolipid K(x).

It localises to the cell membrane. In terms of biological role, component of the A-type ATP synthase that produces ATP from ADP in the presence of a proton gradient across the membrane. The polypeptide is A-type ATP synthase subunit E (Methanococcus maripaludis (strain C6 / ATCC BAA-1332)).